The primary structure comprises 231 residues: Octanoyltransferase (231 aa).

Residues 49 to 224 (ADTPDEIWLL…ALQRLLPPVY (176 aa)) enclose the BPL/LPL catalytic domain. Substrate contacts are provided by residues 88-95 (RGGQITYH), 155-157 (ALG), and 168-170 (GLA). The active-site Acyl-thioester intermediate is the Cys-186.

It belongs to the LipB family.

It is found in the cytoplasm. The enzyme catalyses octanoyl-[ACP] + L-lysyl-[protein] = N(6)-octanoyl-L-lysyl-[protein] + holo-[ACP] + H(+). Its pathway is protein modification; protein lipoylation via endogenous pathway; protein N(6)-(lipoyl)lysine from octanoyl-[acyl-carrier-protein]: step 1/2. In terms of biological role, catalyzes the transfer of endogenously produced octanoic acid from octanoyl-acyl-carrier-protein onto the lipoyl domains of lipoate-dependent enzymes. Lipoyl-ACP can also act as a substrate although octanoyl-ACP is likely to be the physiological substrate. In Aromatoleum aromaticum (strain DSM 19018 / LMG 30748 / EbN1) (Azoarcus sp. (strain EbN1)), this protein is Octanoyltransferase.